The following is a 279-amino-acid chain: Large ribosomal subunit protein uL2 (279 aa).

Residues 223–279 (MAMNPVDHPMGGGEGKSKSGGGRKHPKSPWGQLAKGLKTRNKKKASTKLIVRGRKAK) are disordered. The span at 232–242 (MGGGEGKSKSG) shows a compositional bias: gly residues. The segment covering 259–279 (LKTRNKKKASTKLIVRGRKAK) has biased composition (basic residues).

Belongs to the universal ribosomal protein uL2 family. As to quaternary structure, part of the 50S ribosomal subunit. Forms a bridge to the 30S subunit in the 70S ribosome.

In terms of biological role, one of the primary rRNA binding proteins. Required for association of the 30S and 50S subunits to form the 70S ribosome, for tRNA binding and peptide bond formation. It has been suggested to have peptidyltransferase activity; this is somewhat controversial. Makes several contacts with the 16S rRNA in the 70S ribosome. The chain is Large ribosomal subunit protein uL2 from Chlorobaculum tepidum (strain ATCC 49652 / DSM 12025 / NBRC 103806 / TLS) (Chlorobium tepidum).